Consider the following 350-residue polypeptide: MTIPDKQLAAVFHTHGGPENVKFEEVPVAEPGQDEVLVNIKYTGVCHTDLHALQGDWPLPAKMPLIGGHEGAGVVVKVGAGVTRLKIGDRVGVKWMNSSCGNCEYCMKAEETICPHIQLSGYTVDGTFQHYCIANATHATIIPESVPLEVAAPIMCAGITCYRALKESKVGPGEWICIPGAGGGLGHLAVQYAKAMAMRVVAIDTGDDKAELVKSFGAEVFLDFKKEADMIEAVKAATNGGAHGTLVLSTSPKSYEQAAGFARPGSTMVTVSMPAGAKLGADIFWLTVKMLKICGSHVGNRIDSIEALEYVSRGLVKPYYKVQPFSTLPDVYRLMHENKIAGRIVLDLSK.

Zn(2+) is bound at residue C46. Positions 47, 48, and 51 each coordinate NAD(+). Positions 69, 100, 103, 106, 114, and 156 each coordinate Zn(2+). The NAD(+) site is built by G183, G184, L185, and D204. Residue T205 is modified to Phosphothreonine. Residues K209 and F224 each coordinate NAD(+). Residue T250 is modified to Phosphothreonine. Residues V271, M273, S296, V298, and R343 each coordinate NAD(+).

The protein belongs to the zinc-containing alcohol dehydrogenase family. Homotetramer. Zn(2+) serves as cofactor.

Its subcellular location is the cytoplasm. It catalyses the reaction a primary alcohol + NAD(+) = an aldehyde + NADH + H(+). The catalysed reaction is a secondary alcohol + NAD(+) = a ketone + NADH + H(+). The enzyme catalyses ethanol + NAD(+) = acetaldehyde + NADH + H(+). Its function is as follows. Reduces acetaldehyde to ethanol during the fermentation of glucose. This is Alcohol dehydrogenase (adh1) from Schizosaccharomyces pombe (strain 972 / ATCC 24843) (Fission yeast).